Reading from the N-terminus, the 401-residue chain is UDP-N-acetylglucosamine--N-acetylmuramyl-(pentapeptide) pyrophosphoryl-undecaprenol N-acetylglucosamine transferase (401 aa).

Residues 1–24 (MTRISVPAGQERNDGGISVPAGQE) are disordered. UDP-N-acetyl-alpha-D-glucosamine is bound by residues 39–41 (TAG), N157, R194, S228, and Q324.

It belongs to the glycosyltransferase 28 family. MurG subfamily.

The protein localises to the cell membrane. The enzyme catalyses di-trans,octa-cis-undecaprenyl diphospho-N-acetyl-alpha-D-muramoyl-L-alanyl-D-glutamyl-meso-2,6-diaminopimeloyl-D-alanyl-D-alanine + UDP-N-acetyl-alpha-D-glucosamine = di-trans,octa-cis-undecaprenyl diphospho-[N-acetyl-alpha-D-glucosaminyl-(1-&gt;4)]-N-acetyl-alpha-D-muramoyl-L-alanyl-D-glutamyl-meso-2,6-diaminopimeloyl-D-alanyl-D-alanine + UDP + H(+). It functions in the pathway cell wall biogenesis; peptidoglycan biosynthesis. Its function is as follows. Cell wall formation. Catalyzes the transfer of a GlcNAc subunit on undecaprenyl-pyrophosphoryl-MurNAc-pentapeptide (lipid intermediate I) to form undecaprenyl-pyrophosphoryl-MurNAc-(pentapeptide)GlcNAc (lipid intermediate II). This chain is UDP-N-acetylglucosamine--N-acetylmuramyl-(pentapeptide) pyrophosphoryl-undecaprenol N-acetylglucosamine transferase, found in Mycolicibacterium vanbaalenii (strain DSM 7251 / JCM 13017 / BCRC 16820 / KCTC 9966 / NRRL B-24157 / PYR-1) (Mycobacterium vanbaalenii).